The following is a 132-amino-acid chain: Small ribosomal subunit protein uS8 (132 aa).

Belongs to the universal ribosomal protein uS8 family. In terms of assembly, part of the 30S ribosomal subunit. Contacts proteins S5 and S12.

Functionally, one of the primary rRNA binding proteins, it binds directly to 16S rRNA central domain where it helps coordinate assembly of the platform of the 30S subunit. This Saccharopolyspora erythraea (strain ATCC 11635 / DSM 40517 / JCM 4748 / NBRC 13426 / NCIMB 8594 / NRRL 2338) protein is Small ribosomal subunit protein uS8.